The chain runs to 324 residues: Acetyl-coenzyme A carboxylase carboxyl transferase subunit alpha (324 aa).

The CoA carboxyltransferase C-terminal domain occupies 42-296 (RLSELEEEVY…EKALTRLAEK (255 aa)).

It belongs to the AccA family. Acetyl-CoA carboxylase is a heterohexamer composed of biotin carboxyl carrier protein (AccB), biotin carboxylase (AccC) and two subunits each of ACCase subunit alpha (AccA) and ACCase subunit beta (AccD).

The protein localises to the cytoplasm. The enzyme catalyses N(6)-carboxybiotinyl-L-lysyl-[protein] + acetyl-CoA = N(6)-biotinyl-L-lysyl-[protein] + malonyl-CoA. It functions in the pathway lipid metabolism; malonyl-CoA biosynthesis; malonyl-CoA from acetyl-CoA: step 1/1. Its function is as follows. Component of the acetyl coenzyme A carboxylase (ACC) complex. First, biotin carboxylase catalyzes the carboxylation of biotin on its carrier protein (BCCP) and then the CO(2) group is transferred by the carboxyltransferase to acetyl-CoA to form malonyl-CoA. The sequence is that of Acetyl-coenzyme A carboxylase carboxyl transferase subunit alpha from Shouchella clausii (strain KSM-K16) (Alkalihalobacillus clausii).